Reading from the N-terminus, the 227-residue chain is Ribonuclease 3 (227 aa).

Residues 4-126 (LDRLERKIGY…IIGAMSLDQG (123 aa)) form the RNase III domain. Position 39 (Glu-39) interacts with Mg(2+). Residue Asp-43 is part of the active site. Mg(2+) is bound by residues Asp-112 and Glu-115. Residue Glu-115 is part of the active site. One can recognise a DRBM domain in the interval 153-226 (DAKTRLQEYL…AEQILKELDI (74 aa)).

Belongs to the ribonuclease III family. In terms of assembly, homodimer. Mg(2+) is required as a cofactor.

The protein localises to the cytoplasm. The enzyme catalyses Endonucleolytic cleavage to 5'-phosphomonoester.. Digests double-stranded RNA. Involved in the processing of primary rRNA transcript to yield the immediate precursors to the large and small rRNAs (23S and 16S). Processes some mRNAs, and tRNAs when they are encoded in the rRNA operon. Processes pre-crRNA and tracrRNA of type II CRISPR loci if present in the organism. This Haemophilus influenzae (strain ATCC 51907 / DSM 11121 / KW20 / Rd) protein is Ribonuclease 3.